Consider the following 133-residue polypeptide: Small ribosomal subunit protein uS8c (133 aa).

Disordered regions lie at residues 1 to 23 (MGND…GAET) and 44 to 133 (FSGN…HVWR). 2 stretches are compositionally biased toward polar residues: residues 12 to 23 (APRNASSRGAET) and 55 to 66 (TNRFPVSTSKYQ). The segment covering 67-81 (GRTRKARITTRRRVS) has biased composition (basic residues). The segment covering 114 to 133 (TDREARQKRIGGEAPRHVWR) has biased composition (basic and acidic residues).

The protein belongs to the universal ribosomal protein uS8 family. As to quaternary structure, part of the 30S ribosomal subunit.

It localises to the plastid. It is found in the chloroplast. Its function is as follows. One of the primary rRNA binding proteins, it binds directly to 16S rRNA central domain where it helps coordinate assembly of the platform of the 30S subunit. The polypeptide is Small ribosomal subunit protein uS8c (rps8) (Selaginella uncinata (Blue spike-moss)).